The chain runs to 178 residues: Large ribosomal subunit protein uL6 (178 aa).

The protein belongs to the universal ribosomal protein uL6 family. In terms of assembly, part of the 50S ribosomal subunit.

Its function is as follows. This protein binds to the 23S rRNA, and is important in its secondary structure. It is located near the subunit interface in the base of the L7/L12 stalk, and near the tRNA binding site of the peptidyltransferase center. This is Large ribosomal subunit protein uL6 from Francisella tularensis subsp. tularensis (strain FSC 198).